Here is a 238-residue protein sequence, read N- to C-terminus: MSINWIKITERAREGIKIINALPYETFTTVLFYTHRQMSPSVASASATSSTVGTSVTTTGRVDSSTEENPTSNTEPEYTLEELERLVGVPRQDFLLLIKTFSYILRRISTFIIKPSLLQRELREKLQLEDEAKIDAILRLWVRETTPIMNNLASKRYESNVIEDVAWKLNMEISSHCQQREKTPLAVLQMKTAVGEDINIEMTQPELMELYNQFESIQGELDAMLAMKTTGATAPGNQ.

The segment covering 43-77 has biased composition (low complexity); it reads ASASATSSTVGTSVTTTGRVDSSTEENPTSNTEPE. Positions 43-78 are disordered; that stretch reads ASASATSSTVGTSVTTTGRVDSSTEENPTSNTEPEY. Residues 161-225 form the COMM domain; that stretch reads VIEDVAWKLN…SIQGELDAML (65 aa).

It belongs to the COMM domain-containing protein 10 family. Component of the commander complex consisting of the CCC subcomplex and the retriever subcomplex. Component of the CCC subcomplex. Interacts with Smn; along with Sbat and Hez may form an accessory subcomplex involved in SMN complex function.

Functionally, scaffold protein in the commander complex that is essential for endosomal recycling of transmembrane cargos; the commander complex is composed of the CCC subcomplex and the retriever subcomplex. May modulate activity of cullin-RING E3 ubiquitin ligase (CRL) complexes. May down-regulate activation of NF-kappa-B. May have an accessory function in the survival motor neuron (SMN) complex. Required for neuromuscular function and organismal viability. The chain is COMM domain-containing protein 10 homolog Vlet from Drosophila melanogaster (Fruit fly).